The following is a 678-amino-acid chain: Glycine--tRNA ligase beta subunit (678 aa).

The protein belongs to the class-II aminoacyl-tRNA synthetase family. In terms of assembly, tetramer of two alpha and two beta subunits.

The protein localises to the cytoplasm. The catalysed reaction is tRNA(Gly) + glycine + ATP = glycyl-tRNA(Gly) + AMP + diphosphate. The protein is Glycine--tRNA ligase beta subunit of Streptococcus pneumoniae (strain ATCC BAA-255 / R6).